We begin with the raw amino-acid sequence, 547 residues long: Putative nitric oxide synthase (547 aa).

Residues 24–40 (QLAPNPSSFSPTRAAST) show a composition bias toward low complexity. 2 disordered regions span residues 24–57 (QLAPNPSSFSPTRAASTAPPPPEGAGPAAPSRGD) and 72–91 (VLAPEDAERRRRRREKRKAL). Over residues 81–91 (RRRRREKRKAL) the composition is skewed to basic residues. The CP-type G domain maps to 167 to 343 (ADQLRDKLSY…LYDTPGVHLH (177 aa)).

This sequence belongs to the TRAFAC class YlqF/YawG GTPase family. NOA1 subfamily.

The catalysed reaction is 2 L-arginine + 3 NADPH + 4 O2 + H(+) = 2 L-citrulline + 2 nitric oxide + 3 NADP(+) + 4 H2O. Its function is as follows. Produces nitric oxide (NO) which is a messenger molecule involved in hormonal signaling and defense responses in plant. The polypeptide is Putative nitric oxide synthase (Oryza sativa subsp. japonica (Rice)).